Reading from the N-terminus, the 378-residue chain is tRNA-specific 2-thiouridylase MnmA (378 aa).

ATP is bound by residues 9 to 16 (GVSGGVDS) and methionine 35. The interval 94 to 96 (NPD) is interaction with target base in tRNA. The Nucleophile role is filled by cysteine 99. The cysteines at positions 99 and 195 are disulfide-linked. Residue glycine 123 participates in ATP binding. The tract at residues 145 to 147 (KDQ) is interaction with tRNA. Cysteine 195 functions as the Cysteine persulfide intermediate in the catalytic mechanism. The interaction with tRNA stretch occupies residues 307-308 (RY).

The protein belongs to the MnmA/TRMU family.

It is found in the cytoplasm. The enzyme catalyses S-sulfanyl-L-cysteinyl-[protein] + uridine(34) in tRNA + AH2 + ATP = 2-thiouridine(34) in tRNA + L-cysteinyl-[protein] + A + AMP + diphosphate + H(+). Its function is as follows. Catalyzes the 2-thiolation of uridine at the wobble position (U34) of tRNA, leading to the formation of s(2)U34. The sequence is that of tRNA-specific 2-thiouridylase MnmA from Xanthomonas oryzae pv. oryzae (strain PXO99A).